Consider the following 369-residue polypeptide: Flagellar P-ring protein (369 aa).

Residues 1-24 (MSKTISLLKFIICILISLCSFTYA) form the signal peptide.

It belongs to the FlgI family. In terms of assembly, the basal body constitutes a major portion of the flagellar organelle and consists of four rings (L,P,S, and M) mounted on a central rod.

The protein resides in the bacterial flagellum basal body. Assembles around the rod to form the L-ring and probably protects the motor/basal body from shearing forces during rotation. This chain is Flagellar P-ring protein, found in Buchnera aphidicola subsp. Schizaphis graminum (strain Sg).